A 1279-amino-acid chain; its full sequence is Photoreceptor cilium actin regulator (1279 aa).

Residue Gly2 is the site of N-myristoyl glycine attachment. Residue Cys3 is the site of S-palmitoyl cysteine attachment. Disordered stretches follow at residues 101 to 168 (NKPQ…KGRV), 380 to 598 (AAQV…SHVE), 802 to 821 (EVSESEDISGDVEEDLENLP), 860 to 1107 (ASHP…TTAK), and 1127 to 1279 (KSSS…KEIS). Residues 126-168 (FSGKESKENTPQETSKGNRESVCHQPDSQDHCRQSATESKGRV) show a composition bias toward basic and acidic residues. A compositionally biased stretch (acidic residues) spans 477–491 (SEEEDCSPEEEDELS). 2 stretches are compositionally biased toward basic and acidic residues: residues 535–547 (LKMKEAISERIKF) and 580–598 (GPERQRRSQSEGCLKSHVE). Residues 804 to 818 (SESEDISGDVEEDLE) are compositionally biased toward acidic residues. Composition is skewed to polar residues over residues 886–901 (GSGSSPRLHSTRSGST), 913–925 (DLNSKQTASPSSE), and 955–965 (TNPTPGQSRTL). Residues 972–990 (FSRDPHSSEASRKGPERSL) show a composition bias toward basic and acidic residues. Over residues 1047-1062 (RKTTSPPCQHPQSNPA) the composition is skewed to polar residues. The span at 1076–1090 (PSSASCSSPSVSPSR) shows a compositional bias: low complexity. The segment covering 1091–1100 (GSKDSIHSED) has biased composition (basic and acidic residues). Residues 1226–1241 (WNNSRVPELQGSSTKR) are compositionally biased toward polar residues. The segment covering 1259–1279 (RMNRGQDRPQPESQPQHKEIS) has biased composition (basic and acidic residues).

In terms of tissue distribution, specifically expressed in retina.

It localises to the cell projection. The protein localises to the cilium. Its subcellular location is the photoreceptor outer segment. The protein resides in the photoreceptor inner segment. Its function is as follows. Plays an essential role for normal photoreceptor cell maintenance and vision. The protein is Photoreceptor cilium actin regulator of Mus musculus (Mouse).